A 148-amino-acid chain; its full sequence is Large ribosomal subunit protein bL9 (148 aa).

It belongs to the bacterial ribosomal protein bL9 family.

Functionally, binds to the 23S rRNA. This chain is Large ribosomal subunit protein bL9, found in Agathobacter rectalis (strain ATCC 33656 / DSM 3377 / JCM 17463 / KCTC 5835 / VPI 0990) (Eubacterium rectale).